We begin with the raw amino-acid sequence, 299 residues long: CRISPR-associated endonuclease Cas1 3 (299 aa).

Residues Glu143, His210, and Asp223 each coordinate Mn(2+).

The protein belongs to the CRISPR-associated endonuclease Cas1 family. Homodimer, forms a heterotetramer with a Cas2 homodimer. Mg(2+) is required as a cofactor. It depends on Mn(2+) as a cofactor.

Its function is as follows. CRISPR (clustered regularly interspaced short palindromic repeat), is an adaptive immune system that provides protection against mobile genetic elements (viruses, transposable elements and conjugative plasmids). CRISPR clusters contain spacers, sequences complementary to antecedent mobile elements, and target invading nucleic acids. CRISPR clusters are transcribed and processed into CRISPR RNA (crRNA). Acts as a dsDNA endonuclease. Involved in the integration of spacer DNA into the CRISPR cassette. This Methanospirillum hungatei JF-1 (strain ATCC 27890 / DSM 864 / NBRC 100397 / JF-1) protein is CRISPR-associated endonuclease Cas1 3.